Consider the following 1180-residue polypeptide: DNA-directed RNA polymerase subunit beta (1180 aa).

Belongs to the RNA polymerase beta chain family. The RNAP catalytic core consists of 2 alpha, 1 beta, 1 beta' and 1 omega subunit. When a sigma factor is associated with the core the holoenzyme is formed, which can initiate transcription.

The enzyme catalyses RNA(n) + a ribonucleoside 5'-triphosphate = RNA(n+1) + diphosphate. Its function is as follows. DNA-dependent RNA polymerase catalyzes the transcription of DNA into RNA using the four ribonucleoside triphosphates as substrates. This Macrococcus caseolyticus (strain JCSC5402) (Macrococcoides caseolyticum) protein is DNA-directed RNA polymerase subunit beta.